Reading from the N-terminus, the 309-residue chain is Probable lipid kinase YegS-like (309 aa).

A DAGKc domain is found at 1–134 (MAPSHWRLIL…VDLLRIDAEH (134 aa)). Residues Thr39, 65-71 (GDGTLSE), and Thr96 each bind ATP. 3 residues coordinate Mg(2+): Val219, Asp222, and Leu224. Glu280 serves as the catalytic Proton acceptor.

The protein belongs to the diacylglycerol/lipid kinase family. YegS lipid kinase subfamily. Requires Mg(2+) as cofactor. Ca(2+) is required as a cofactor.

Its subcellular location is the cytoplasm. Functionally, probably phosphorylates lipids; the in vivo substrate is unknown. The polypeptide is Probable lipid kinase YegS-like (Xanthomonas oryzae pv. oryzae (strain MAFF 311018)).